Here is a 591-residue protein sequence, read N- to C-terminus: V-type ATP synthase alpha chain (591 aa).

233 to 240 (GPFGAGKT) is a binding site for ATP.

This sequence belongs to the ATPase alpha/beta chains family.

It carries out the reaction ATP + H2O + 4 H(+)(in) = ADP + phosphate + 5 H(+)(out). In terms of biological role, produces ATP from ADP in the presence of a proton gradient across the membrane. The V-type alpha chain is a catalytic subunit. The sequence is that of V-type ATP synthase alpha chain from Streptococcus pyogenes serotype M49 (strain NZ131).